The following is a 765-amino-acid chain: Palmitoyltransferase ZDHHC8 (765 aa).

The Cytoplasmic portion of the chain corresponds to 1–13 (MPRSPGTRLKPAK). The chain crosses the membrane as a helical span at residues 14–34 (YIPVATAAALLVGSSTLFFVF). Topologically, residues 35 to 52 (TCPWLTRAVSPAVPVYNG) are lumenal. A helical membrane pass occupies residues 53 to 73 (IIFLFVLANFSMATFMDPGVF). The Cytoplasmic portion of the chain corresponds to 74–148 (PRADEDEDKE…NCIGRRNYRY (75 aa)). Positions 104 to 154 (KWCATCHFYRPPRCSHCSVCDNCVEDFDHHCPWVNNCIGRRNYRYFFLFLL) constitute a DHHC domain. Cys134 functions as the S-palmitoyl cysteine intermediate in the catalytic mechanism. A helical transmembrane segment spans residues 149–169 (FFLFLLSLSAHMVGVVAFGLV). Residues 170–190 (YVLNHAEGLGAAHTTITMAVM) are Lumenal-facing. A helical membrane pass occupies residues 191–211 (CVAGLFFIPVIGLTGFHVVLV). The Cytoplasmic segment spans residues 212–765 (TRGRTTNEQV…VGGTTYEISV (554 aa)). The segment at 293–352 (GLGRSKSKGSLDRLDEKPLDLGPPLPPKIEAGTFSSDLQTPRPGSAESALSVQRTSPPTP) is disordered. A compositionally biased stretch (basic and acidic residues) spans 301 to 311 (GSLDRLDEKPL). Residue Ser337 is modified to Phosphoserine. Arg441 bears the Omega-N-methylarginine mark. The segment at 509–540 (LHPGATGDPPRPLPRSFSPVLGPRPREPSPVR) is disordered. A phosphoserine mark is found at Ser606, Ser627, Ser675, Ser725, and Ser743. Residues 613 to 746 (GPGFGGARNP…PPGPSASPTR (134 aa)) are disordered. Residues 622–653 (PALQTSLSSLSSSVSRAPRTSSSSLQADQASS) show a composition bias toward low complexity.

It belongs to the DHHC palmitoyltransferase family. ERF2/ZDHHC9 subfamily.

The protein localises to the golgi apparatus membrane. It is found in the mitochondrion membrane. It carries out the reaction L-cysteinyl-[protein] + hexadecanoyl-CoA = S-hexadecanoyl-L-cysteinyl-[protein] + CoA. Functionally, palmitoyltransferase that catalyzes the addition of palmitate onto various protein substrates and therefore functions in several unrelated biological processes. Through the palmitoylation of ABCA1 regulates the localization of the transporter to the plasma membrane and thereby regulates its function in cholesterol and phospholipid efflux. Could also pamitoylate the D(2) dopamine receptor DRD2 and regulate its stability and localization to the plasma membrane. Could also play a role in glutamatergic transmission. In Pan troglodytes (Chimpanzee), this protein is Palmitoyltransferase ZDHHC8.